The following is a 428-amino-acid chain: Neuromedin-U receptor 1 (428 aa).

Topologically, residues 1–59 are extracellular; the sequence is MTPPCLNCSIFPGALSPNASRSPLVCNISEFKWPYQPEDLNLTDEALRLKYLGPQQMKQ. 2 N-linked (GlcNAc...) asparagine glycosylation sites follow: asparagine 27 and asparagine 41. A helical transmembrane segment spans residues 60 to 80; the sequence is FVPICVTYLLIFVVGTLGNGL. Residues 81-96 lie on the Cytoplasmic side of the membrane; sequence TCTVILRNKTMRTPTN. Residues 97 to 117 traverse the membrane as a helical segment; it reads FYLFSLAVSDMLVLLVGLPLE. The Extracellular segment spans residues 118-137; that stretch reads LYEMQQNYPFQLGASACYFR. Cysteine 134 and cysteine 219 are disulfide-bonded. The chain crosses the membrane as a helical span at residues 138-158; it reads ILLLETVCLASVLNVTALSVE. Topologically, residues 159-181 are cytoplasmic; the sequence is RYVAVVRPLQAKSVMTRAHVRRM. The helical transmembrane segment at 182 to 202 threads the bilayer; that stretch reads VGAIWVLATLFSLPNTSLHGL. The Extracellular segment spans residues 203–235; sequence SQLTVPCRGPVPDSAICSLVGPMDFYKLVVLTT. A helical transmembrane segment spans residues 236 to 256; that stretch reads ALLFFCLPMVTISVLYLLIGL. The Cytoplasmic portion of the chain corresponds to 257–294; sequence RLRRERMLLQVEVKGRKTAATQETSHRRIQLQDRGRRQ. A helical transmembrane segment spans residues 295–315; the sequence is VTKMLFALVVVFGICWAPFHA. The Extracellular segment spans residues 316–339; it reads DRIMWSLVYGHSTEGLHLAYQCVH. Residues 340 to 360 traverse the membrane as a helical segment; sequence IASGIFFYLGSAANPVLYSLM. Over 361-428 the chain is Cytoplasmic; the sequence is STRFRETFLQ…PGCQQETDPS (68 aa).

The protein belongs to the G-protein coupled receptor 1 family. In terms of tissue distribution, ubiquitously expressed.

The protein resides in the cell membrane. In terms of biological role, receptor for the neuromedin-U and neuromedin-S neuropeptides. In Mus musculus (Mouse), this protein is Neuromedin-U receptor 1 (Nmur1).